Reading from the N-terminus, the 314-residue chain is Zinc transporter ZIP3 (314 aa).

Residues 1–3 (MNL) lie on the Extracellular side of the membrane. Residues 4 to 24 (IFAKVLCLLAILVLMMLGSLI) traverse the membrane as a helical segment. Topologically, residues 25 to 41 (PVKISEADFDKSSRSRK) are cytoplasmic. A helical membrane pass occupies residues 42–62 (ILSLSNSFAGGVFLATCFNAL). Residues 63-84 (LPAVREKFFDLLKIGNISTDYP) lie on the Extracellular side of the membrane. A helical membrane pass occupies residues 85-105 (LAETIMMVGFFLTVFVEQTVM). Residues 106-169 (TFRKEKPSFI…KELSSSSPIR (64 aa)) are Cytoplasmic-facing. The chain crosses the membrane as a helical span at residues 170–190 (LFSLVFALSAHSVFEGLALGL). At 191–196 (QEDGNK) the chain is on the extracellular side. The chain crosses the membrane as a helical span at residues 197–217 (LLSLFIGVVIHETLVAMALGV). The Cytoplasmic portion of the chain corresponds to 218–229 (SMAKVNTHLKDA). The helical transmembrane segment at 230–250 (IKMAVLVSTMIPIGIVVGMAI) threads the bilayer. At 251 to 262 (QSAQNMASSIAS) the chain is on the extracellular side. The helical transmembrane segment at 263-283 (ALLQGIAGGTFIFVTFFEILV) threads the bilayer. Residues 284–292 (KELEEKNDR) lie on the Cytoplasmic side of the membrane. A helical transmembrane segment spans residues 293 to 313 (LLKVLFLVLGYTVLAVLVLFK). A topological domain (extracellular) is located at residue Trp314.

It belongs to the ZIP transporter (TC 2.A.5) family.

It is found in the cell membrane. It localises to the apical cell membrane. The enzyme catalyses Zn(2+)(in) = Zn(2+)(out). Its function is as follows. Transporter for the divalent cation Zn(2+). Mediates the influx of Zn(2+) into cells from extracellular space. This Xenopus tropicalis (Western clawed frog) protein is Zinc transporter ZIP3 (slc39a3).